Here is a 346-residue protein sequence, read N- to C-terminus: Tetraacyldisaccharide 4'-kinase (346 aa).

Residue 54 to 61 (TVGGAGKT) participates in ATP binding.

The protein belongs to the LpxK family.

It carries out the reaction a lipid A disaccharide + ATP = a lipid IVA + ADP + H(+). Its pathway is glycolipid biosynthesis; lipid IV(A) biosynthesis; lipid IV(A) from (3R)-3-hydroxytetradecanoyl-[acyl-carrier-protein] and UDP-N-acetyl-alpha-D-glucosamine: step 6/6. Functionally, transfers the gamma-phosphate of ATP to the 4'-position of a tetraacyldisaccharide 1-phosphate intermediate (termed DS-1-P) to form tetraacyldisaccharide 1,4'-bis-phosphate (lipid IVA). In Rhizobium meliloti (strain 1021) (Ensifer meliloti), this protein is Tetraacyldisaccharide 4'-kinase.